The chain runs to 1342 residues: DNA-directed RNA polymerase subunit beta (1342 aa).

The protein belongs to the RNA polymerase beta chain family. The RNAP catalytic core consists of 2 alpha, 1 beta, 1 beta' and 1 omega subunit. When a sigma factor is associated with the core the holoenzyme is formed, which can initiate transcription.

It catalyses the reaction RNA(n) + a ribonucleoside 5'-triphosphate = RNA(n+1) + diphosphate. In terms of biological role, DNA-dependent RNA polymerase catalyzes the transcription of DNA into RNA using the four ribonucleoside triphosphates as substrates. The chain is DNA-directed RNA polymerase subunit beta from Shewanella amazonensis (strain ATCC BAA-1098 / SB2B).